A 134-amino-acid polypeptide reads, in one-letter code: NADH-quinone oxidoreductase subunit A (134 aa).

Transmembrane regions (helical) follow at residues 12–32 (FAIY…LAAL), 64–84 (FYLV…LFAW), and 93–113 (WVGF…LVYL).

It belongs to the complex I subunit 3 family. As to quaternary structure, NDH-1 is composed of 13 different subunits. Subunits NuoA, H, J, K, L, M, N constitute the membrane sector of the complex.

The protein resides in the cell inner membrane. It catalyses the reaction a quinone + NADH + 5 H(+)(in) = a quinol + NAD(+) + 4 H(+)(out). In terms of biological role, NDH-1 shuttles electrons from NADH, via FMN and iron-sulfur (Fe-S) centers, to quinones in the respiratory chain. The immediate electron acceptor for the enzyme in this species is believed to be ubiquinone. Couples the redox reaction to proton translocation (for every two electrons transferred, four hydrogen ions are translocated across the cytoplasmic membrane), and thus conserves the redox energy in a proton gradient. This Shewanella oneidensis (strain ATCC 700550 / JCM 31522 / CIP 106686 / LMG 19005 / NCIMB 14063 / MR-1) protein is NADH-quinone oxidoreductase subunit A.